The chain runs to 81 residues: Photosystem I iron-sulfur center (81 aa).

4Fe-4S ferredoxin-type domains lie at 2–31 (SHTV…MVPW) and 39–68 (VASS…IRVY). [4Fe-4S] cluster contacts are provided by cysteine 11, cysteine 14, cysteine 17, cysteine 21, cysteine 48, cysteine 51, cysteine 54, and cysteine 58.

As to quaternary structure, the cyanobacterial PSI reaction center is composed of one copy each of PsaA,B,C,D,E,F,I,J,K,L,M and X, and forms trimeric complexes. The cofactor is [4Fe-4S] cluster.

Its subcellular location is the cellular thylakoid membrane. The catalysed reaction is reduced [plastocyanin] + hnu + oxidized [2Fe-2S]-[ferredoxin] = oxidized [plastocyanin] + reduced [2Fe-2S]-[ferredoxin]. In terms of biological role, apoprotein for the two 4Fe-4S centers FA and FB of photosystem I (PSI); essential for photochemical activity. FB is the terminal electron acceptor of PSI, donating electrons to ferredoxin. The C-terminus interacts with PsaA/B/D and helps assemble the protein into the PSI complex. Required for binding of PsaD and PsaE to PSI. PSI is a plastocyanin/cytochrome c6-ferredoxin oxidoreductase, converting photonic excitation into a charge separation, which transfers an electron from the donor P700 chlorophyll pair to the spectroscopically characterized acceptors A0, A1, FX, FA and FB in turn. This is Photosystem I iron-sulfur center from Trichormus variabilis (strain ATCC 29413 / PCC 7937) (Anabaena variabilis).